Consider the following 309-residue polypeptide: ATP synthase gamma chain (309 aa).

The protein belongs to the ATPase gamma chain family. In terms of assembly, F-type ATPases have 2 components, CF(1) - the catalytic core - and CF(0) - the membrane proton channel. CF(1) has five subunits: alpha(3), beta(3), gamma(1), delta(1), epsilon(1). CF(0) has three main subunits: a, b and c.

It localises to the cell membrane. Produces ATP from ADP in the presence of a proton gradient across the membrane. The gamma chain is believed to be important in regulating ATPase activity and the flow of protons through the CF(0) complex. The chain is ATP synthase gamma chain from Salinispora tropica (strain ATCC BAA-916 / DSM 44818 / JCM 13857 / NBRC 105044 / CNB-440).